The primary structure comprises 361 residues: Phosphoserine aminotransferase (361 aa).

An L-glutamate-binding site is contributed by Arg42. Pyridoxal 5'-phosphate is bound by residues 76–77 (AS), Trp102, Thr152, Asp172, and Gln195. Lys196 bears the N6-(pyridoxal phosphate)lysine mark. 237–238 (NT) contributes to the pyridoxal 5'-phosphate binding site.

It belongs to the class-V pyridoxal-phosphate-dependent aminotransferase family. SerC subfamily. In terms of assembly, homodimer. Pyridoxal 5'-phosphate serves as cofactor.

Its subcellular location is the cytoplasm. The catalysed reaction is O-phospho-L-serine + 2-oxoglutarate = 3-phosphooxypyruvate + L-glutamate. The enzyme catalyses 4-(phosphooxy)-L-threonine + 2-oxoglutarate = (R)-3-hydroxy-2-oxo-4-phosphooxybutanoate + L-glutamate. It participates in amino-acid biosynthesis; L-serine biosynthesis; L-serine from 3-phospho-D-glycerate: step 2/3. Functionally, catalyzes the reversible conversion of 3-phosphohydroxypyruvate to phosphoserine and of 3-hydroxy-2-oxo-4-phosphonooxybutanoate to phosphohydroxythreonine. The sequence is that of Phosphoserine aminotransferase from Halalkalibacterium halodurans (strain ATCC BAA-125 / DSM 18197 / FERM 7344 / JCM 9153 / C-125) (Bacillus halodurans).